The chain runs to 142 residues: Large ribosomal subunit protein bL17 (142 aa).

The protein belongs to the bacterial ribosomal protein bL17 family. In terms of assembly, part of the 50S ribosomal subunit. Contacts protein L32.

This is Large ribosomal subunit protein bL17 from Wolbachia pipientis wMel.